The following is an 81-amino-acid chain: Photosystem I iron-sulfur center (81 aa).

2 consecutive 4Fe-4S ferredoxin-type domains span residues 2-31 and 39-68; these read AHSV…MIPW and IASA…VRVY. Residues Cys-11, Cys-14, Cys-17, Cys-21, Cys-48, Cys-51, Cys-54, and Cys-58 each contribute to the [4Fe-4S] cluster site.

In terms of assembly, the eukaryotic PSI reaction center is composed of at least 11 subunits. It depends on [4Fe-4S] cluster as a cofactor.

Its subcellular location is the plastid. The protein localises to the chloroplast thylakoid membrane. The catalysed reaction is reduced [plastocyanin] + hnu + oxidized [2Fe-2S]-[ferredoxin] = oxidized [plastocyanin] + reduced [2Fe-2S]-[ferredoxin]. Its function is as follows. Apoprotein for the two 4Fe-4S centers FA and FB of photosystem I (PSI); essential for photochemical activity. FB is the terminal electron acceptor of PSI, donating electrons to ferredoxin. The C-terminus interacts with PsaA/B/D and helps assemble the protein into the PSI complex. Required for binding of PsaD and PsaE to PSI. PSI is a plastocyanin-ferredoxin oxidoreductase, converting photonic excitation into a charge separation, which transfers an electron from the donor P700 chlorophyll pair to the spectroscopically characterized acceptors A0, A1, FX, FA and FB in turn. The polypeptide is Photosystem I iron-sulfur center (Psilotum nudum (Whisk fern)).